The sequence spans 137 residues: Small ribosomal subunit protein uS12 (137 aa).

Positions M1–K26 are disordered. Residues R9 to K18 show a composition bias toward basic residues.

The protein belongs to the universal ribosomal protein uS12 family. In terms of assembly, part of the 30S ribosomal subunit. Contacts proteins S8 and S17. May interact with IF1 in the 30S initiation complex.

Its function is as follows. With S4 and S5 plays an important role in translational accuracy. Functionally, interacts with and stabilizes bases of the 16S rRNA that are involved in tRNA selection in the A site and with the mRNA backbone. Located at the interface of the 30S and 50S subunits, it traverses the body of the 30S subunit contacting proteins on the other side and probably holding the rRNA structure together. The combined cluster of proteins S8, S12 and S17 appears to hold together the shoulder and platform of the 30S subunit. The sequence is that of Small ribosomal subunit protein uS12 from Listeria innocua serovar 6a (strain ATCC BAA-680 / CLIP 11262).